Consider the following 1001-residue polypeptide: 26S proteasome non-ATPase regulatory subunit 1 homolog B (1001 aa).

The residue at position 2 (Ala-2) is an N-acetylalanine. Lys-166 participates in a covalent cross-link: Glycyl lysine isopeptide (Lys-Gly) (interchain with G-Cter in ubiquitin). PC repeat units follow at residues 412–447 (SATA…GGSP), 452–485 (GALY…EVIQ), 487–521 (GACL…VAGE), 522–555 (AAGI…EKII), 557–590 (GLAL…IIRY), 591–626 (GGMY…DVRR), 627–659 (TAVL…PHVR), 661–695 (GAAL…FVRQ), 696–736 (GALI…DTMS), and 739–771 (GAIL…TAVI). 2 disordered regions span residues 853–896 (AKKE…TVEK) and 954–1001 (SLTD…YASP). The span at 854–863 (KKEAEQKAKA) shows a compositional bias: basic and acidic residues. Ser-889 is modified (phosphoserine). Positions 961-985 (STASPAVGAEAAGQAQQAATTSAMA) are enriched in low complexity.

The protein belongs to the proteasome subunit S1 family. As to quaternary structure, component of the 19S regulatory particle (RP/PA700) base subcomplex of the 26S proteasome. The 26S proteasome is composed of a core protease (CP), known as the 20S proteasome, capped at one or both ends by the 19S regulatory particle (RP/PA700). The RP/PA700 complex is composed of at least 17 different subunits in two subcomplexes, the base and the lid, which form the portions proximal and distal to the 20S proteolytic core, respectively.

Functionally, acts as a regulatory subunit of the 26 proteasome which is involved in the ATP-dependent degradation of ubiquitinated proteins. The polypeptide is 26S proteasome non-ATPase regulatory subunit 1 homolog B (RPN2B) (Arabidopsis thaliana (Mouse-ear cress)).